The primary structure comprises 636 residues: Dehydrogenase ARMGADRAFT_1018426 (636 aa).

The signal sequence occupies residues 1-19 (MPALTYLLLAAIGASTVHS). Residues 49-50 (TA) and 70-71 (EG) each bind FAD. N99 carries N-linked (GlcNAc...) asparagine glycosylation. Residues W104 and 134 to 137 (NGLT) each bind FAD. N253 carries an N-linked (GlcNAc...) asparagine glycan. V280 lines the FAD pocket. N-linked (GlcNAc...) asparagine glycans are attached at residues N333, N380, N394, and N498. H570 acts as the Proton acceptor in catalysis. FAD contacts are provided by residues A603 and 614-615 (PS).

It belongs to the GMC oxidoreductase family. FAD is required as a cofactor.

Its pathway is secondary metabolite biosynthesis. Its function is as follows. Dehydrogenase, part of the gene cluster that mediates the biosynthesis of melleolides, a range of antifungal and phytotoxic polyketide derivatives composed of an orsellinic acid (OA) moiety esterified to various sesquiterpene alcohols. The first step in melleolides biosynthesis is performed by the delta(6)-protoilludene synthase PRO1 which catalyzes the cyclization of farnesyl diphosphate to protoilludene. The orsellinic acid synthase armB produces OA by condensing acetyl-CoA with 3 malonyl-CoA units in a three-round chain elongation reaction folowed by a C2-C7 ring closure. ArmB further catalyzes the trans-esterification of OA to the various sesquiterpene alcohols resulting from the hydroxylation of protoilludene. The melleolides cluster also includes 5 cytochrome P450 monooxygenases, 4 NAD(+)-dependent oxidoreductases, one flavin-dependent oxidoreductase, and one O-methyltransferase. The cytochrome P450 monooxygenases may be involved in protoilludene hydroxylation to elaborate melleolides with multiple alcohol groups, such as melleolide D, which carries alcohol functionalities at C-4, C-5, C-10, and C-13. The role of the NAD(+)-dependent enzymes remains unknown. Numerous melleolides, including arnamial, show 5'-O-methylation of the aromatic moiety which may be catalyzed by the methyltransferase encoded in the cluster. The flavin-dependent oxidoreductase might represent the dehydrogenase yielding the aldehyde in position 1 of arnamial and other melleolides. Finally, several halogenase localized outside of the cluster, are able to catalyze the transfer of a single chlorine atom to the melleolide backbone, resulting in a 6'-chloromelleolide product. In Armillaria gallica (Bulbous honey fungus), this protein is Dehydrogenase ARMGADRAFT_1018426.